Reading from the N-terminus, the 29-residue chain is Photosystem I reaction center subunit XII (29 aa).

The helical transmembrane segment at 7–26 threads the bilayer; the sequence is IFVALILALFSFVLAIRLGT.

This sequence belongs to the PsaM family.

It is found in the plastid. The protein localises to the chloroplast thylakoid membrane. The sequence is that of Photosystem I reaction center subunit XII from Guillardia theta (Cryptophyte).